Reading from the N-terminus, the 457-residue chain is MTKKVYVKTFGCQMNEYDSDKMVDVLNAAEGLEKTDTPEDADIILFNTCSVREKAQEKVFSDLGRVRELKEAKPGLLIGVGGCVASQEGASIVSRAPYVDLVFGPQTLHRLPQMIDQRRASGRAQVDISFPEIEKFDHLPPARVEGPSAFVSIMEGCSKYCSYCVVPYTRGDEVSRPLDDVLTEVAGLADQGVREVTLLGQNVNAYRGALTAGSTEIADFATLIEYVADIPGIERIRYTTSHPKEFTQRLIDTYAKVPKLVSHLHLPVQHGSDRILMAMKRGYTVLEYKSVIRKLRAIRPDLSLSTDMIVGFPGETEEDFDKMMALVHEMSYDTSFSFIYSPRPGTPAANLHDDTPREVKLKRLQHLQATIEENVARISRSMVGKVERILVEGPSRKDPNELSGRTENNRVVNFPAPLASHPRLIGQMIDVKINHAYPHSLRGELLLVSDDASAATH.

The 118-residue stretch at 3–120 folds into the MTTase N-terminal domain; sequence KKVYVKTFGC…LPQMIDQRRA (118 aa). Residues Cys12, Cys49, Cys83, Cys157, Cys161, and Cys164 each contribute to the [4Fe-4S] cluster site. One can recognise a Radical SAM core domain in the interval 143–377; sequence RVEGPSAFVS…QATIEENVAR (235 aa). The 68-residue stretch at 380-447 folds into the TRAM domain; the sequence is RSMVGKVERI…PHSLRGELLL (68 aa).

This sequence belongs to the methylthiotransferase family. MiaB subfamily. Monomer. [4Fe-4S] cluster serves as cofactor.

It localises to the cytoplasm. The catalysed reaction is N(6)-dimethylallyladenosine(37) in tRNA + (sulfur carrier)-SH + AH2 + 2 S-adenosyl-L-methionine = 2-methylsulfanyl-N(6)-dimethylallyladenosine(37) in tRNA + (sulfur carrier)-H + 5'-deoxyadenosine + L-methionine + A + S-adenosyl-L-homocysteine + 2 H(+). Catalyzes the methylthiolation of N6-(dimethylallyl)adenosine (i(6)A), leading to the formation of 2-methylthio-N6-(dimethylallyl)adenosine (ms(2)i(6)A) at position 37 in tRNAs that read codons beginning with uridine. The polypeptide is tRNA-2-methylthio-N(6)-dimethylallyladenosine synthase (Burkholderia ambifaria (strain ATCC BAA-244 / DSM 16087 / CCUG 44356 / LMG 19182 / AMMD) (Burkholderia cepacia (strain AMMD))).